Consider the following 193-residue polypeptide: Probable GTP-binding protein EngB (193 aa).

In terms of domain architecture, EngB-type G spans 22–193 (LLPEVALAGR…AAWEAIYRHL (172 aa)). GTP contacts are provided by residues 30–37 (GRSNVGKS), 57–61 (GKTQT), 75–78 (DVPG), 142–145 (TKLD), and 174–176 (FSS). 2 residues coordinate Mg(2+): serine 37 and threonine 59.

It belongs to the TRAFAC class TrmE-Era-EngA-EngB-Septin-like GTPase superfamily. EngB GTPase family. Mg(2+) is required as a cofactor.

Necessary for normal cell division and for the maintenance of normal septation. The polypeptide is Probable GTP-binding protein EngB (Exiguobacterium sibiricum (strain DSM 17290 / CCUG 55495 / CIP 109462 / JCM 13490 / 255-15)).